Consider the following 173-residue polypeptide: Peptide methionine sulfoxide reductase MsrA (173 aa).

The active site involves C10.

It belongs to the MsrA Met sulfoxide reductase family.

It catalyses the reaction L-methionyl-[protein] + [thioredoxin]-disulfide + H2O = L-methionyl-(S)-S-oxide-[protein] + [thioredoxin]-dithiol. The enzyme catalyses [thioredoxin]-disulfide + L-methionine + H2O = L-methionine (S)-S-oxide + [thioredoxin]-dithiol. Functionally, has an important function as a repair enzyme for proteins that have been inactivated by oxidation. Catalyzes the reversible oxidation-reduction of methionine sulfoxide in proteins to methionine. This is Peptide methionine sulfoxide reductase MsrA from Nautilia profundicola (strain ATCC BAA-1463 / DSM 18972 / AmH).